The chain runs to 107 residues: Potassium voltage-gated channel subfamily E member 3 (107 aa).

Asn-5, Asn-22, and Asn-45 each carry an N-linked (GlcNAc...) asparagine glycan. The tract at residues 31–54 (CRPGPGPGSGTGPDNQTEDHRASL) is disordered. Residues 61-81 (SYMYILFVMFLFAVTVGSLIL) traverse the membrane as a helical segment. The tract at residues 72–83 (FAVTVGSLILGY) is interaction with KCNQ1. At 82–103 (GYTRSRKVDKRSDPYHVYIKNR) the chain is on the cytoplasmic side.

The protein belongs to the potassium channel KCNE family. As to quaternary structure, interacts with KCNB1. Interacts with KCNC2. Associates with KCNC4/Kv3.4. Interacts with KCNQ1; associates with a KCNQ1:KCNE3 stoichiometry of 4:4; produces a current with nearly instantaneous activation with a linear current-voltage relationship and alters membrane raft localization; affects KCNQ1 structure and gating properties.

The protein localises to the cell membrane. Its subcellular location is the cytoplasm. The protein resides in the perikaryon. It is found in the cell projection. It localises to the dendrite. The protein localises to the membrane raft. Its function is as follows. Ancillary protein that functions as a regulatory subunit of the voltage-gated potassium (Kv) channel complex composed of pore-forming and potassium-conducting alpha subunits and of regulatory beta subunits. KCNE3 beta subunit modulates the gating kinetics and enhances stability of the channel complex. Alters the gating of the delayed rectifier Kv channel containing KCNB1 alpha subunit. Associates with KCNC4/Kv3.4 alpha subunit to form the subthreshold Kv channel in skeletal muscle and to establish the resting membrane potential (RMP) in muscle cells. Association with KCNQ1/KCLQT1 alpha subunit may form the intestinal cAMP-stimulated potassium channel involved in chloride secretion that produces a current with nearly instantaneous activation with a linear current-voltage relationship. The sequence is that of Potassium voltage-gated channel subfamily E member 3 from Rattus norvegicus (Rat).